A 201-amino-acid polypeptide reads, in one-letter code: Peptidyl-tRNA hydrolase (201 aa).

Y14 is a binding site for tRNA. H19 serves as the catalytic Proton acceptor. Y64, N66, and N112 together coordinate tRNA.

Belongs to the PTH family. Monomer.

The protein localises to the cytoplasm. The catalysed reaction is an N-acyl-L-alpha-aminoacyl-tRNA + H2O = an N-acyl-L-amino acid + a tRNA + H(+). Hydrolyzes ribosome-free peptidyl-tRNAs (with 1 or more amino acids incorporated), which drop off the ribosome during protein synthesis, or as a result of ribosome stalling. In terms of biological role, catalyzes the release of premature peptidyl moieties from peptidyl-tRNA molecules trapped in stalled 50S ribosomal subunits, and thus maintains levels of free tRNAs and 50S ribosomes. The protein is Peptidyl-tRNA hydrolase of Bradyrhizobium diazoefficiens (strain JCM 10833 / BCRC 13528 / IAM 13628 / NBRC 14792 / USDA 110).